The primary structure comprises 637 residues: GTPase-activating protein GYP1 (637 aa).

A compositionally biased stretch (basic and acidic residues) spans 1–17 (MGVRSAAKEMHERDHNS). Disordered stretches follow at residues 1-152 (MGVR…GDRY) and 187-233 (RTLS…NDSK). Over residues 18-27 (DSSSLVTSLM) the composition is skewed to polar residues. A compositionally biased stretch (low complexity) spans 28–45 (KSWRISSASSSKKPSLYK). Over residues 46–59 (MNTTESTSLPSGYA) the composition is skewed to polar residues. A Phosphoserine modification is found at Ser-69. Composition is skewed to polar residues over residues 79–91 (QQASTRRTSNSYS) and 98–107 (PTLSTASNES). The span at 115–127 (RQHHQRHHHHQQP) shows a compositional bias: basic residues. Composition is skewed to low complexity over residues 128–142 (RHSSSGSVGNNCSNS) and 187–207 (RTLSRKSTSSSINSISNMGTS). Residues 208 to 223 (AVRNSSSSFTYPQLPQ) are compositionally biased toward polar residues. Ser-250 carries the phosphoserine modification. In terms of domain architecture, Rab-GAP TBC spans 280 to 508 (GIPKIHRPVV…RMWDTYLSET (229 aa)). Positions 543 to 564 (DFQSPTTALSNMTPNNAVEDSG) are disordered.

The protein localises to the golgi apparatus. It is found in the golgi stack. Functionally, GTPase-activating protein (GAP) that stimulates specifically the intrinsic GTPase activity of Ypt/Rab-type GTPases YPT1 and YPT7. Functions on the Golgi as a negative regulator of YPT1. Functions on the vacuole as a negative regulator of YPT7. It is also active on SEC4 and YPT51. Provides a catalytic arginine (arginine finger) and glutamine (glutamine finger) in trans to accelerate the GTP hydrolysis rate of the substrate GTPase. The protein is GTPase-activating protein GYP1 (GYP1) of Saccharomyces cerevisiae (strain ATCC 204508 / S288c) (Baker's yeast).